The primary structure comprises 398 residues: Protein-glutamate methylesterase/protein-glutamine glutaminase (398 aa).

Positions K4–L121 constitute a Response regulatory domain. 4-aspartylphosphate is present on D55. Positions R133 to S200 are disordered. 2 stretches are compositionally biased toward polar residues: residues R136–I146 and R168–S200. The CheB-type methylesterase domain maps to S205 to G398. Residues S217, H244, and D340 contribute to the active site.

This sequence belongs to the CheB family. Phosphorylated by CheA. Phosphorylation of the N-terminal regulatory domain activates the methylesterase activity.

It localises to the cytoplasm. It carries out the reaction [protein]-L-glutamate 5-O-methyl ester + H2O = L-glutamyl-[protein] + methanol + H(+). It catalyses the reaction L-glutaminyl-[protein] + H2O = L-glutamyl-[protein] + NH4(+). Functionally, involved in chemotaxis. Part of a chemotaxis signal transduction system that modulates chemotaxis in response to various stimuli. Catalyzes the demethylation of specific methylglutamate residues introduced into the chemoreceptors (methyl-accepting chemotaxis proteins or MCP) by CheR. Also mediates the irreversible deamidation of specific glutamine residues to glutamic acid. This Shewanella frigidimarina (strain NCIMB 400) protein is Protein-glutamate methylesterase/protein-glutamine glutaminase.